We begin with the raw amino-acid sequence, 261 residues long: Kallikrein 1-related peptidase b1 (261 aa).

The first 18 residues, 1–18 (MWFLILFLALSLGGIDAA), serve as a signal peptide directing secretion. A propeptide spans 19-24 (PPVQSR) (activation peptide). A Peptidase S1 domain is found at 25–258 (IVGGFKCEKN…FTSWIKDTLA (234 aa)). 5 disulfides stabilise this stretch: C31-C173, C50-C66, C152-C219, C184-C198, and C209-C234. The Charge relay system role is filled by H65. N102 is a glycosylation site (N-linked (GlcNAc...) asparagine). D120 acts as the Charge relay system in catalysis. The active-site Charge relay system is the S213.

It belongs to the peptidase S1 family. Kallikrein subfamily.

It catalyses the reaction Preferential cleavage of Arg-|-Xaa bonds in small molecule substrates. Highly selective action to release kallidin (lysyl-bradykinin) from kininogen involves hydrolysis of Met-|-Xaa or Leu-|-Xaa.. Its function is as follows. Glandular kallikreins cleave Met-Lys and Arg-Ser bonds in kininogen to release Lys-bradykinin. The sequence is that of Kallikrein 1-related peptidase b1 (Klk1b1) from Mus musculus (Mouse).